A 200-amino-acid polypeptide reads, in one-letter code: Small ribosomal subunit protein eS1 (200 aa).

This sequence belongs to the eukaryotic ribosomal protein eS1 family.

The sequence is that of Small ribosomal subunit protein eS1 from Thermococcus sibiricus (strain DSM 12597 / MM 739).